The following is a 630-amino-acid chain: Ankyrin repeat protein OPG025 (630 aa).

6 ANK repeats span residues 36–69 (DGET…YKNI), 70–100 (NDFD…EINS), 103–134 (NGIN…PTCS), 174–210 (MGKT…EMCH), 338–367 (KHIN…VVVN), and 408–437 (HGRS…DINI).

The protein belongs to the orthopoxvirus OPG025 family. As to quaternary structure, interacts with components of host SCF complex CUL1 and SKP1 and components of the cullin deneddylation/COP9 signalosome complex subunits COPS7A and COPS7B.

Its function is as follows. Plays a role in the inhibition of host immune repsonse by counteracting the action of interferons on early events in the viral replication cycle. The sequence is that of Ankyrin repeat protein OPG025 (OPG025) from Monkeypox virus.